Reading from the N-terminus, the 712-residue chain is 1,4-alpha-glucan branching enzyme GlgB (712 aa).

The Nucleophile role is filled by Asp-397. Catalysis depends on Glu-450, which acts as the Proton donor.

The protein belongs to the glycosyl hydrolase 13 family. GlgB subfamily. In terms of assembly, monomer.

The enzyme catalyses Transfers a segment of a (1-&gt;4)-alpha-D-glucan chain to a primary hydroxy group in a similar glucan chain.. The protein operates within glycan biosynthesis; glycogen biosynthesis. Its function is as follows. Catalyzes the formation of the alpha-1,6-glucosidic linkages in glycogen by scission of a 1,4-alpha-linked oligosaccharide from growing alpha-1,4-glucan chains and the subsequent attachment of the oligosaccharide to the alpha-1,6 position. The sequence is that of 1,4-alpha-glucan branching enzyme GlgB from Bradyrhizobium sp. (strain ORS 278).